We begin with the raw amino-acid sequence, 97 residues long: Exodeoxyribonuclease 7 small subunit (97 aa).

The segment at 1-21 (MAKTATPGACASDPGSGPLPE) is disordered.

Belongs to the XseB family. In terms of assembly, heterooligomer composed of large and small subunits.

It localises to the cytoplasm. It catalyses the reaction Exonucleolytic cleavage in either 5'- to 3'- or 3'- to 5'-direction to yield nucleoside 5'-phosphates.. In terms of biological role, bidirectionally degrades single-stranded DNA into large acid-insoluble oligonucleotides, which are then degraded further into small acid-soluble oligonucleotides. The chain is Exodeoxyribonuclease 7 small subunit from Burkholderia mallei (strain NCTC 10247).